We begin with the raw amino-acid sequence, 587 residues long: Kelch-like protein 3 (587 aa).

At serine 10 the chain carries Phosphoserine. A BTB domain is found at 50-117 (CDVMIVAEDV…VYTAEIEVTE (68 aa)). One can recognise a BACK domain in the interval 152–254 (CLGIRAFADV…PRDYLVQTVE (103 aa)). Threonine 295 bears the Phosphothreonine mark. 6 Kelch repeats span residues 302–347 (VMIV…FMAG), 348–394 (HVYA…VLND), 396–441 (LYAV…VVEG), 442–490 (KLYA…VLSG), 491–537 (QLYA…AVNG), and 539–585 (LYVV…VIHK). Residue threonine 375 is modified to Phosphothreonine. Residues serine 376 and serine 433 each carry the phosphoserine modification.

The protein belongs to the KLHL3 family. In terms of assembly, homodimer. Component of the BCR(KLHL3) E3 ubiquitin ligase complex, at least composed of CUL3 and KLHL3 and RBX1. Interacts with CLDN8. Phosphorylation at Ser-433 by PKA or PKC decreases the interaction with WNK1 and WNK4, leading to inhibit their degradation by the BCR(KLHL3) complex. Phosphorylated at Ser-433 by PKC in response to angiotensin II signaling, decreasing ability to promote degradation of WNK1 and WNK4, leading to activation of Na-Cl cotransporter SLC12A3/NCC. Phosphorylation at Ser-433 is increased by insulin. Dephosphorylated at Ser-433 by calcineurin PPP3CA, promoting degradation of WNK1 and WNK4.

It localises to the cytoplasm. Its subcellular location is the cytoskeleton. The protein resides in the cytosol. The protein operates within protein modification; protein ubiquitination. Its function is as follows. Substrate-specific adapter of a BCR (BTB-CUL3-RBX1) E3 ubiquitin ligase complex that acts as a regulator of ion transport in the distal nephron. The BCR(KLHL3) complex acts by mediating ubiquitination and degradation of WNK1 and WNK4, two activators of Na-Cl cotransporter SLC12A3/NCC in distal convoluted tubule cells of kidney, thereby regulating NaCl reabsorption. The BCR(KLHL3) complex also mediates ubiquitination and degradation of WNK3. The BCR(KLHL3) complex also mediates ubiquitination of CLDN8, a tight-junction protein required for paracellular chloride transport in the kidney, leading to its degradation. The chain is Kelch-like protein 3 (KLHL3) from Pongo abelii (Sumatran orangutan).